The sequence spans 259 residues: Small ribosomal subunit protein mS23 (259 aa).

The protein belongs to the mitochondrion-specific ribosomal protein mS23 family. In terms of assembly, component of the mitochondrial small ribosomal subunit.

Its subcellular location is the mitochondrion. This chain is Small ribosomal subunit protein mS23 (RSM25), found in Pyricularia oryzae (strain 70-15 / ATCC MYA-4617 / FGSC 8958) (Rice blast fungus).